A 293-amino-acid chain; its full sequence is Probable xyloglucan endotransglucosylase/hydrolase protein 7 (293 aa).

A signal peptide spans 1–29; that stretch reads MVVSLFSSRNVFYTLSLCLFAALYQPVMS. The GH16 domain occupies 30-223; the sequence is RPAKFEDDFR…WSRAPFYAYY (194 aa). Glutamate 109 (nucleophile) is an active-site residue. Glutamate 113 functions as the Proton donor in the catalytic mechanism. A xyloglucan-binding site is contributed by glutamate 113. Asparagine 117 carries N-linked (GlcNAc...) asparagine glycosylation. Xyloglucan is bound by residues 126–128, 136–138, 202–203, and glycine 207; these read QTN, DRE, and DW. Asparagine 213 carries an N-linked (GlcNAc...) asparagine glycan. 2 disulfides stabilise this stretch: cysteine 231–cysteine 239 and cysteine 276–cysteine 289. Xyloglucan is bound at residue arginine 281.

Belongs to the glycosyl hydrolase 16 family. XTH group 1 subfamily. Contains at least one intrachain disulfide bond essential for its enzymatic activity.

The protein localises to the secreted. The protein resides in the cell wall. It is found in the extracellular space. It localises to the apoplast. It carries out the reaction breaks a beta-(1-&gt;4) bond in the backbone of a xyloglucan and transfers the xyloglucanyl segment on to O-4 of the non-reducing terminal glucose residue of an acceptor, which can be a xyloglucan or an oligosaccharide of xyloglucan.. In terms of biological role, catalyzes xyloglucan endohydrolysis (XEH) and/or endotransglycosylation (XET). Cleaves and religates xyloglucan polymers, an essential constituent of the primary cell wall, and thereby participates in cell wall construction of growing tissues. The chain is Probable xyloglucan endotransglucosylase/hydrolase protein 7 (XTH7) from Arabidopsis thaliana (Mouse-ear cress).